Reading from the N-terminus, the 295-residue chain is Small ribosomal subunit protein uS2B (295 aa).

An N-acetylserine modification is found at Ser-2. The interval 54 to 113 is interaction with PPP1R16B; it reads TWEKLLLAARAIVAIENPADVSVISSRNTGQRAVLKFAAATGATPIAGRFTPGTFTNQIQ. 2 laminin-binding regions span residues 161–180 and 205–229; these read IPCN…MLAR and RDPE…EFQG. The segment covering 218–227 has biased composition (basic and acidic residues); the sequence is AEKAVTKEEF. The segment at 218–242 is disordered; it reads AEKAVTKEEFQGEWTAPSPEFTATQ. 5 [DE]-W-[ST] repeats span residues 230-232, 247-249, 266-268, 275-277, and 293-295; these read EWT and DWS. A laminin-binding region spans residues 242-295; that stretch reads QPEVADWSEGVQVPSVPIQQFPTEDWSAQPATEDWSAAPTAQATEWVGATTDWS. A disordered region spans residues 266 to 295; that stretch reads DWSAQPATEDWSAAPTAQATEWVGATTDWS.

It belongs to the universal ribosomal protein uS2 family. Monomer (37LRP) and homodimer (67LR). Component of the small ribosomal subunit. Mature ribosomes consist of a small (40S) and a large (60S) subunit. The 40S subunit contains about 33 different proteins and 1 molecule of RNA (18S). The 60S subunit contains about 49 different proteins and 3 molecules of RNA (28S, 5.8S and 5S). Interacts with RPS21. Interacts with several laminins including at least LAMB1. Interacts with MDK. The mature dimeric form interacts with PPP1R16B (via its fourth ankyrin repeat). Interacts with PPP1CA only in the presence of PPP1R16B. In terms of processing, acylated. Acylation may be a prerequisite for conversion of the monomeric 37 kDa laminin receptor precursor (37LRP) to the mature dimeric 67 kDa laminin receptor (67LR), and may provide a mechanism for membrane association. Cleaved by stromelysin-3 (ST3) at the cell surface. Cleavage by stromelysin-3 may be a mechanism to alter cell-extracellular matrix interactions.

It localises to the cell membrane. The protein resides in the cytoplasm. It is found in the nucleus. In terms of biological role, required for the assembly and/or stability of the 40S ribosomal subunit. Required for the processing of the 20S rRNA-precursor to mature 18S rRNA in a late step of the maturation of 40S ribosomal subunits. Also functions as a cell surface receptor for laminin. Plays a role in cell adhesion to the basement membrane and in the consequent activation of signaling transduction pathways. May play a role in cell fate determination and tissue morphogenesis. Also acts as a receptor for several other ligands, including the pathogenic prion protein, viruses, and bacteria. Acts as a PPP1R16B-dependent substrate of PPP1CA. In Homo sapiens (Human), this protein is Small ribosomal subunit protein uS2B.